Reading from the N-terminus, the 637-residue chain is Threonine--tRNA ligase (637 aa).

Positions 1-61 (MPVITLPNGS…EQDAALSIVT (61 aa)) constitute a TGS domain. The tract at residues 242-533 (DHRKLGKKFD…LIENYEGAFP (292 aa)) is catalytic. Zn(2+) contacts are provided by C333, H384, and H510.

It belongs to the class-II aminoacyl-tRNA synthetase family. In terms of assembly, homodimer. Zn(2+) is required as a cofactor.

It is found in the cytoplasm. It catalyses the reaction tRNA(Thr) + L-threonine + ATP = L-threonyl-tRNA(Thr) + AMP + diphosphate + H(+). Its function is as follows. Catalyzes the attachment of threonine to tRNA(Thr) in a two-step reaction: L-threonine is first activated by ATP to form Thr-AMP and then transferred to the acceptor end of tRNA(Thr). Also edits incorrectly charged L-seryl-tRNA(Thr). The protein is Threonine--tRNA ligase of Teredinibacter turnerae (strain ATCC 39867 / T7901).